Consider the following 430-residue polypeptide: MQVDLGTVFDATPGVTQDGLERLDERVATAHERIERGRRNNEPGYAALNLPETVDTTTIHDAVASFEDPTAILIVGIGGSALGAATLVDALGDDTAPSVYVLDNVDPASISRILESIPLSETVLNVVSRSGTTAETLSNFLVVREAMTKAGVDWTDRTIVTTGTDGNLRQLAKSESLPALSVPEGVPGRFSVLSTVGLVVAALKGIQISELITGAADAAAELSGSLFETPAYAYGATTYALATRGARTNVMMPYAENLETFAEWFAQLWAESLGKDNRGQTPIRALGATDQHSQLQLYRAGPHNKVITLIRPRNRPSCTIPSTDLDGLSYLGGSDLGSLLDAEFEATEASLVDADIPTIRVEINAIDAQSLGALLYEFEVACICYGELASVPTFTQPAVEWGKRAARGLLGDDKFMEAAAVADKPTLRVE.

Glu271 functions as the Proton donor in the catalytic mechanism. Residues His292, His303, and Lys403 contribute to the active site.

Belongs to the GPI family.

Its subcellular location is the cytoplasm. It catalyses the reaction alpha-D-glucose 6-phosphate = beta-D-fructose 6-phosphate. It participates in carbohydrate biosynthesis; gluconeogenesis. The protein operates within carbohydrate degradation; glycolysis; D-glyceraldehyde 3-phosphate and glycerone phosphate from D-glucose: step 2/4. In terms of biological role, catalyzes the reversible isomerization of glucose-6-phosphate to fructose-6-phosphate. This is Probable glucose-6-phosphate isomerase from Haloquadratum walsbyi (strain DSM 16790 / HBSQ001).